Consider the following 337-residue polypeptide: Pyridoxal 5'-phosphate synthase subunit PdxS (337 aa).

Asp65 lines the D-ribose 5-phosphate pocket. Lys122 acts as the Schiff-base intermediate with D-ribose 5-phosphate in catalysis. Gly194 serves as a coordination point for D-ribose 5-phosphate. Residue Lys206 participates in D-glyceraldehyde 3-phosphate binding. D-ribose 5-phosphate-binding positions include Gly255 and 276 to 277 (GS).

It belongs to the PdxS/SNZ family. In the presence of PdxT, forms a dodecamer of heterodimers.

The catalysed reaction is aldehydo-D-ribose 5-phosphate + D-glyceraldehyde 3-phosphate + L-glutamine = pyridoxal 5'-phosphate + L-glutamate + phosphate + 3 H2O + H(+). It functions in the pathway cofactor biosynthesis; pyridoxal 5'-phosphate biosynthesis. Functionally, catalyzes the formation of pyridoxal 5'-phosphate from ribose 5-phosphate (RBP), glyceraldehyde 3-phosphate (G3P) and ammonia. The ammonia is provided by the PdxT subunit. Can also use ribulose 5-phosphate and dihydroxyacetone phosphate as substrates, resulting from enzyme-catalyzed isomerization of RBP and G3P, respectively. This is Pyridoxal 5'-phosphate synthase subunit PdxS from Pyrobaculum arsenaticum (strain DSM 13514 / JCM 11321 / PZ6).